Reading from the N-terminus, the 165-residue chain is Endoribonuclease YbeY (165 aa).

The Zn(2+) site is built by His119, His123, and His129.

Belongs to the endoribonuclease YbeY family. Zn(2+) serves as cofactor.

It localises to the cytoplasm. Functionally, single strand-specific metallo-endoribonuclease involved in late-stage 70S ribosome quality control and in maturation of the 3' terminus of the 16S rRNA. The chain is Endoribonuclease YbeY from Streptomyces coelicolor (strain ATCC BAA-471 / A3(2) / M145).